The chain runs to 249 residues: 5'-nucleotidase SurE (249 aa).

A divalent metal cation contacts are provided by Asp-9, Asp-10, Ser-40, and Asn-92.

The protein belongs to the SurE nucleotidase family. A divalent metal cation is required as a cofactor.

It localises to the cytoplasm. It carries out the reaction a ribonucleoside 5'-phosphate + H2O = a ribonucleoside + phosphate. Nucleotidase that shows phosphatase activity on nucleoside 5'-monophosphates. This Shewanella sp. (strain ANA-3) protein is 5'-nucleotidase SurE.